The primary structure comprises 559 residues: Protein pp71 (559 aa).

Cys-218 is modified (S-nitrosocysteine; by host). Thr-223 bears the Phosphothreonine mark. 2 disordered regions span residues 404-440 (EFLP…TPLS) and 530-559 (SSTL…RPRI). Residues 415–430 (TEEEEEEEEEDDEDDL) are compositionally biased toward acidic residues. Low complexity-rich tracts occupy residues 431–440 (SSTPTPTPLS) and 543–559 (PIST…RPRI).

The protein belongs to the herpesviridae pp71 family. As to quaternary structure, interacts with the host protein DAXX; this interaction takes place at ND10 and induces the reversal of DAXX-mediated repression of viral transcription. Interacts with UL35. Interacts with host TMEM173/STING1; this interaction inhibits the cGAS/STING pathway. Interacts with host RB1; this interaction mediates RB1 proteasomal degradation. Post-translationally, S-nitrosylation limits ability to undermine the cGAS/STING antiviral pathway.

It is found in the virion tegument. The protein localises to the host nucleus. The protein resides in the host endoplasmic reticulum. Its function is as follows. Stimulates viral immediate-early (IE) transcription. Plays a role in the inhibition of the host innate repsonse by targeting STING1 and thus the cGAS-STING pathway. Also counteracts host DAXX-mediated repression of viral transcription. Displaces a DAXX-binding protein, ATRX, from nuclear domain 10 sites (ND10) shortly after infection. Increases the basal level of SUMOylated DAXX in infected cells. Stimulates quiescent cells to re-enter the cell cycle, proceed through G1 and enter the S phase. Interacts with hypophosphorylated forms of RB1 and induces their degradation by the proteasome without involving ubiquitin conjugation. The protein is Protein pp71 (UL82) of Human cytomegalovirus (strain AD169) (HHV-5).